We begin with the raw amino-acid sequence, 378 residues long: Small RNA 2'-O-methyltransferase (378 aa).

Residue Asp-61 coordinates S-adenosyl-L-methionine. Residues Glu-114, Glu-117, His-118, and His-176 each contribute to the Mg(2+) site.

It belongs to the methyltransferase superfamily. HEN1 family. Requires Mg(2+) as cofactor.

It is found in the cytoplasm. It catalyses the reaction small RNA 3'-end nucleotide + S-adenosyl-L-methionine = small RNA 3'-end 2'-O-methylnucleotide + S-adenosyl-L-homocysteine + H(+). Methyltransferase that adds a 2'-O-methyl group at the 3'-end of small RNAs. This is Small RNA 2'-O-methyltransferase from Schizosaccharomyces pombe (strain 972 / ATCC 24843) (Fission yeast).